A 60-amino-acid polypeptide reads, in one-letter code: Serum basic protease inhibitor (60 aa).

In terms of domain architecture, BPTI/Kunitz inhibitor spans 7–57 (CLEPPYTGPCKAAMIRYFYNAKAGFCETFVYGGCRAKSNNFKSAEDCMRTC). 3 disulfide bridges follow: cysteine 7–cysteine 57, cysteine 16–cysteine 40, and cysteine 32–cysteine 53.

It is found in the secreted. This inhibitor has activity very similar to that of the basic protease inhibitor from bovine tissues. This chain is Serum basic protease inhibitor, found in Bos taurus (Bovine).